A 513-amino-acid polypeptide reads, in one-letter code: ATP synthase subunit alpha (513 aa).

Residue 169–176 (GDRQIGKT) coordinates ATP.

It belongs to the ATPase alpha/beta chains family. F-type ATPases have 2 components, CF(1) - the catalytic core - and CF(0) - the membrane proton channel. CF(1) has five subunits: alpha(3), beta(3), gamma(1), delta(1), epsilon(1). CF(0) has three main subunits: a(1), b(2) and c(9-12). The alpha and beta chains form an alternating ring which encloses part of the gamma chain. CF(1) is attached to CF(0) by a central stalk formed by the gamma and epsilon chains, while a peripheral stalk is formed by the delta and b chains.

The protein resides in the cell inner membrane. The catalysed reaction is ATP + H2O + 4 H(+)(in) = ADP + phosphate + 5 H(+)(out). Functionally, produces ATP from ADP in the presence of a proton gradient across the membrane. The alpha chain is a regulatory subunit. The chain is ATP synthase subunit alpha from Francisella philomiragia subsp. philomiragia (strain ATCC 25017 / CCUG 19701 / FSC 153 / O#319-036).